Here is a 257-residue protein sequence, read N- to C-terminus: NAD-capped RNA hydrolase NudC (257 aa).

Substrate contacts are provided by Lys25 and Arg69. The Zn(2+) site is built by Cys98 and Cys101. Glu111 is a substrate binding site. Cys116 and Cys119 together coordinate Zn(2+). Position 124 (Tyr124) interacts with substrate. Positions 125-248 constitute a Nudix hydrolase domain; it reads PQIAPCIIVA…TVARRLIEDT (124 aa). Positions 158, 174, and 178 each coordinate a divalent metal cation. Residues 159-180 carry the Nudix box motif; that stretch reads GFVEVGETLEQAVAREVMEESG. A substrate-binding site is contributed by 192–199; sequence QPWPFPQS. Residue Glu219 participates in a divalent metal cation binding. Residue Ala241 coordinates substrate.

The protein belongs to the Nudix hydrolase family. NudC subfamily. In terms of assembly, homodimer. Mg(2+) serves as cofactor. Mn(2+) is required as a cofactor. It depends on Zn(2+) as a cofactor.

It catalyses the reaction a 5'-end NAD(+)-phospho-ribonucleoside in mRNA + H2O = a 5'-end phospho-adenosine-phospho-ribonucleoside in mRNA + beta-nicotinamide D-ribonucleotide + 2 H(+). The catalysed reaction is NAD(+) + H2O = beta-nicotinamide D-ribonucleotide + AMP + 2 H(+). It carries out the reaction NADH + H2O = reduced beta-nicotinamide D-ribonucleotide + AMP + 2 H(+). In terms of biological role, mRNA decapping enzyme that specifically removes the nicotinamide adenine dinucleotide (NAD) cap from a subset of mRNAs by hydrolyzing the diphosphate linkage to produce nicotinamide mononucleotide (NMN) and 5' monophosphate mRNA. The NAD-cap is present at the 5'-end of some mRNAs and stabilizes RNA against 5'-processing. Has preference for mRNAs with a 5'-end purine. Catalyzes the hydrolysis of a broad range of dinucleotide pyrophosphates. This Escherichia coli O157:H7 protein is NAD-capped RNA hydrolase NudC.